The primary structure comprises 836 residues: Neuroligin-2 (836 aa).

A signal peptide spans 1–14; that stretch reads MWLLALCLVGLAGA. Topologically, residues 15 to 678 are extracellular; that stretch reads QRGGGGPGGG…DSRDYSTELS (664 aa). Asn98 and Asn136 each carry an N-linked (GlcNAc...) asparagine glycan. Intrachain disulfides connect Cys106/Cys141, Cys317/Cys328, and Cys487/Cys521. N-linked (GlcNAc...) asparagine glycosylation is present at Asn522. The tract at residues 623-661 is disordered; that stretch reads PPYATRWPPRTPGPGTSGTRRPPPPATLPPESDIDLGPR. The helical transmembrane segment at 679–699 threads the bilayer; it reads VTVAVGASLLFLNILAFAALY. The segment at 679 to 699 is required for interaction with LHFPL4; that stretch reads VTVAVGASLLFLNILAFAALY. The Cytoplasmic portion of the chain corresponds to 700–836; sequence YKRDRRQELR…LPHPHSTTRV (137 aa). Disordered regions lie at residues 711–735 and 791–836; these read RRLS…TAGR and LLPS…TTRV. Phosphoserine occurs at positions 714 and 719. Gly residues predominate over residues 717–728; sequence GGSGSGVPGGGP. The span at 796 to 819 shows a compositional bias: pro residues; it reads LGPPPPPPPPSLHPFGPFPPPPPT. Residues 824–836 are compositionally biased toward polar residues; the sequence is NNTLPHPHSTTRV.

This sequence belongs to the type-B carboxylesterase/lipase family. In terms of assembly, interacts with neurexins NRXN1, NRXN2 and NRXN3. Interaction with neurexins is mediated by heparan sulfate glycan modification on neurexin. Interacts (via its C-terminus) with DLG4/PSD-95 (via PDZ domain 3). Interacts with PATJ. Interacts with GPHN. Interacts with MDGA1 and MDGA2. Found in a complex with MAGI2 and IGSF9B, where it interacts with MAGI2 (via WW 1, WW 2 and PDZ 2 domains). Identified in a complex of 720 kDa composed of LHFPL4, NLGN2, GABRA1, GABRB2, GABRG2 and GABRB3. Interacts with LHFPL4; leading to mutual regulation of the protein level and synaptic clustering. Interacts with GABRA1. As to expression, detected on hippocampus neurons, especially at inhibitory synapses. Detected in retina, in the outer and inner plexiform layer. Detected in pancreas, in islet of Langerhans beta cells (at protein level). Expressed in brain, spinal cord and dorsal root ganglion. Detected in brain, and at lower levels in pancreas islet beta cells.

Its subcellular location is the cell membrane. It is found in the postsynaptic cell membrane. It localises to the presynaptic cell membrane. In terms of biological role, transmembrane scaffolding protein involved in cell-cell interactions via its interactions with neurexin family members. Mediates cell-cell interactions both in neurons and in other types of cells, such as Langerhans beta cells. Plays a role in synapse function and synaptic signal transmission, especially via gamma-aminobutyric acid receptors (GABA(A) receptors). Functions by recruiting and clustering synaptic proteins. Promotes clustering of postsynaptic GABRG2 and GPHN. Promotes clustering of postsynaptic LHFPL4. Modulates signaling by inhibitory synapses, and thereby plays a role in controlling the ratio of signaling by excitatory and inhibitory synapses and information processing. Required for normal signal amplitude from inhibitory synapses, but is not essential for normal signal frequency. May promote the initial formation of synapses, but is not essential for this. In vitro, triggers the de novo formation of presynaptic structures. Mediates cell-cell interactions between Langerhans beta cells and modulates insulin secretion. The sequence is that of Neuroligin-2 (Nlgn2) from Rattus norvegicus (Rat).